The following is a 273-amino-acid chain: 4-hydroxy-tetrahydrodipicolinate reductase (273 aa).

NAD(+) contacts are provided by residues 12 to 17 (GAGGRM) and E38. Residue R39 participates in NADP(+) binding. NAD(+) is bound by residues 102-104 (GTT) and 126-129 (AANF). H159 (proton donor/acceptor) is an active-site residue. (S)-2,3,4,5-tetrahydrodipicolinate is bound at residue H160. The active-site Proton donor is K163. 169–170 (GT) lines the (S)-2,3,4,5-tetrahydrodipicolinate pocket.

This sequence belongs to the DapB family. As to quaternary structure, homotetramer.

Its subcellular location is the cytoplasm. The enzyme catalyses (S)-2,3,4,5-tetrahydrodipicolinate + NAD(+) + H2O = (2S,4S)-4-hydroxy-2,3,4,5-tetrahydrodipicolinate + NADH + H(+). The catalysed reaction is (S)-2,3,4,5-tetrahydrodipicolinate + NADP(+) + H2O = (2S,4S)-4-hydroxy-2,3,4,5-tetrahydrodipicolinate + NADPH + H(+). The protein operates within amino-acid biosynthesis; L-lysine biosynthesis via DAP pathway; (S)-tetrahydrodipicolinate from L-aspartate: step 4/4. Its function is as follows. Catalyzes the conversion of 4-hydroxy-tetrahydrodipicolinate (HTPA) to tetrahydrodipicolinate. In Yersinia enterocolitica serotype O:8 / biotype 1B (strain NCTC 13174 / 8081), this protein is 4-hydroxy-tetrahydrodipicolinate reductase.